The primary structure comprises 87 residues: Hemocyanin alpha chain (87 aa).

Belongs to the tyrosinase family. Hemocyanin subfamily. In terms of assembly, polymer that contains six different types of chains (alpha, beta, gamma, delta, epsilon, and zeta). As to expression, hemolymph.

Its subcellular location is the secreted. The protein localises to the extracellular space. In terms of biological role, hemocyanins are copper-containing oxygen carriers occurring freely dissolved in the hemolymph of many mollusks and arthropods. The polypeptide is Hemocyanin alpha chain (Tachypleus tridentatus (Japanese horseshoe crab)).